Here is a 210-residue protein sequence, read N- to C-terminus: N-(5'-phosphoribosyl)anthranilate isomerase (210 aa).

Belongs to the TrpF family.

The catalysed reaction is N-(5-phospho-beta-D-ribosyl)anthranilate = 1-(2-carboxyphenylamino)-1-deoxy-D-ribulose 5-phosphate. Its pathway is amino-acid biosynthesis; L-tryptophan biosynthesis; L-tryptophan from chorismate: step 3/5. The polypeptide is N-(5'-phosphoribosyl)anthranilate isomerase (Nostoc punctiforme (strain ATCC 29133 / PCC 73102)).